A 158-amino-acid polypeptide reads, in one-letter code: MSIEVTVEIPKGSRNKYEIDHETGKVYLDRYLFTPMAYPLDYGYIDHTLGEDGDPLDALVILPESVFPAVVVKSRIIGVFKMTDEAGGDDKLLSVLDDPRYDHIQDISDVSDFLKDEIEHFFVHYKDLEKGKHVDGSGWGDKAEAEKIHAEAIDRYKA.

Glu8 is a binding site for Mg(2+). Substrate is bound by residues Lys16, Arg30, and Tyr42. Asp52, Asp57, Asp84, and Asp89 together coordinate Mg(2+). Catalysis depends on Asp89, which acts as the Proton acceptor. Tyr125 contributes to the substrate binding site.

This sequence belongs to the PPase family. Homohexamer. The cofactor is Mg(2+).

The protein localises to the cytoplasm. It carries out the reaction diphosphate + H2O = 2 phosphate + H(+). Its function is as follows. Catalyzes the hydrolysis of inorganic pyrophosphate (PPi) forming two phosphate ions. This chain is Inorganic pyrophosphatase, found in Corynebacterium glutamicum (strain ATCC 13032 / DSM 20300 / JCM 1318 / BCRC 11384 / CCUG 27702 / LMG 3730 / NBRC 12168 / NCIMB 10025 / NRRL B-2784 / 534).